We begin with the raw amino-acid sequence, 175 residues long: Protein FLOWERING LOCUS T (175 aa).

The protein belongs to the phosphatidylethanolamine-binding protein family. In terms of assembly, interacts with FD/BZIP14 and FDP/BZIP27. Interacts with FTIP1/MCTP1 in phloem companion cells. Interacts with NAKR1. Mostly localized in leaves vasculature.

Its subcellular location is the cytoplasm. The protein resides in the nucleus. The protein localises to the endoplasmic reticulum. Its function is as follows. Component of the mobile flower-promoting signal (floral stimulus or florigen). Promotes the transition from vegetative growth to flowering. Required for 'SEPALLATA3' (SEP3) and 'FRUITFULL' (FUL) accumulation in mature rosette leaves. Seems to acts in parallel with 'LEAFY' to induce flowering by regulating 'APETALA1'. Translated in leaves and then transported to the shoot apical meristem where it activates the transcription of several floral meristem identity genes. May play a role in both the autonomous and the long-day flowering pathways. This is Protein FLOWERING LOCUS T from Arabidopsis thaliana (Mouse-ear cress).